Reading from the N-terminus, the 26-residue chain is Phospholipase A2 homolog A1 (26 aa).

Post-translationally, contains 7 disulfide bonds. Expressed by the venom gland.

Its subcellular location is the secreted. The sequence is that of Phospholipase A2 homolog A1 from Micrurus pyrrhocryptus (Coral snake).